The chain runs to 224 residues: MPGGLLLGDEAPNFEANTTIGRIRFHDYLGDSWGILFSHPRDFTPVCTTELGRAAKLAPEFAKRNVKMIALSIDSVEDHLAWSKDINAYNGEEPTEKLPFPIIDDKNRDLAIQLGMLDPAEKDEKGMPVTARVVFIFGPDKKLKLSILYPATTGRNFDEILRVIISLQLTAEKRVATPVDWKNGDSVMVLPTIPEEEAKKLFPKGVFTKELPSGKKYLRYTPQP.

The region spanning 5-169 (LLLGDEAPNF…ILRVIISLQL (165 aa)) is the Thioredoxin domain. The segment at 31–40 (DSWGILFSHP) is required and sufficient for targeting to lysosomes and lamellar bodies. Phosphothreonine is present on threonine 44. The Cysteine sulfenic acid (-SOH) intermediate; for peroxidase activity role is filled by cysteine 47. At lysine 63 the chain carries N6-acetyllysine. Tyrosine 89 carries the phosphotyrosine modification. Aspartate 140 serves as the catalytic For phospholipase activity. Threonine 177 carries the phosphothreonine; by MAPK modification. An N6-acetyllysine; alternate modification is found at lysine 209. The residue at position 209 (lysine 209) is an N6-succinyllysine; alternate.

It belongs to the peroxiredoxin family. Prx6 subfamily. Homodimer. Interacts with GSTP1; mediates PRDX6 glutathionylation and regeneration. Interacts with APEX1. Interacts with STH. May interact with FAM168B. May interact with HTR2A. The cofactor is Does not need Ca(2+) as cofactor.. Post-translationally, irreversibly inactivated by overoxidation of Cys-47 to sulfinic acid (Cys-SO(2)H) and sulfonic acid (Cys-SO(3)H) forms upon oxidative stress. Phosphorylation at Thr-177 by MAP kinases increases the phospholipase activity of the enzyme. The phosphorylated form exhibits a greater lysophosphatidylcholine acyltransferase activity compared to the non-phosphorylated form.

Its subcellular location is the cytoplasm. The protein localises to the lysosome. The enzyme catalyses a hydroperoxide + 2 glutathione = an alcohol + glutathione disulfide + H2O. It catalyses the reaction a 1,2-diacyl-sn-glycero-3-phosphocholine + H2O = a 1-acyl-sn-glycero-3-phosphocholine + a fatty acid + H(+). It carries out the reaction a 1-acyl-sn-glycero-3-phosphocholine + an acyl-CoA = a 1,2-diacyl-sn-glycero-3-phosphocholine + CoA. The catalysed reaction is 1-hexadecanoyl-sn-glycero-3-phosphocholine + hexadecanoyl-CoA = 1,2-dihexadecanoyl-sn-glycero-3-phosphocholine + CoA. The enzyme catalyses 1,2-dihexadecanoyl-sn-glycero-3-phosphocholine + H2O = 1-hexadecanoyl-sn-glycero-3-phosphocholine + hexadecanoate + H(+). Its function is as follows. Thiol-specific peroxidase that catalyzes the reduction of hydrogen peroxide and organic hydroperoxides to water and alcohols, respectively. Can reduce H(2)O(2) and short chain organic, fatty acid, and phospholipid hydroperoxides. Also has phospholipase activity, and can therefore either reduce the oxidized sn-2 fatty acyl group of phospholipids (peroxidase activity) or hydrolyze the sn-2 ester bond of phospholipids (phospholipase activity). These activities are dependent on binding to phospholipids at acidic pH and to oxidized phospholipds at cytosolic pH. Plays a role in cell protection against oxidative stress by detoxifying peroxides and in phospholipid homeostasis. Exhibits acyl-CoA-dependent lysophospholipid acyltransferase which mediates the conversion of lysophosphatidylcholine (1-acyl-sn-glycero-3-phosphocholine or LPC) into phosphatidylcholine (1,2-diacyl-sn-glycero-3-phosphocholine or PC). Shows a clear preference for LPC as the lysophospholipid and for palmitoyl CoA as the fatty acyl substrate. The polypeptide is Peroxiredoxin-6 (PRDX6) (Bos taurus (Bovine)).